We begin with the raw amino-acid sequence, 562 residues long: NAD-dependent malic enzyme (562 aa).

The active-site Proton donor is tyrosine 101. Arginine 154 contacts NAD(+). Lysine 172 acts as the Proton acceptor in catalysis. The a divalent metal cation site is built by glutamate 243, aspartate 244, and aspartate 267. Residues aspartate 267 and asparagine 415 each coordinate NAD(+).

The protein belongs to the malic enzymes family. Homotetramer. Mg(2+) is required as a cofactor. Requires Mn(2+) as cofactor.

The enzyme catalyses (S)-malate + NAD(+) = pyruvate + CO2 + NADH. It catalyses the reaction oxaloacetate + H(+) = pyruvate + CO2. This is NAD-dependent malic enzyme from Shewanella woodyi (strain ATCC 51908 / MS32).